A 129-amino-acid chain; its full sequence is Mediator of RNA polymerase II transcription subunit 31-B (129 aa).

Belongs to the Mediator complex subunit 31 family. As to quaternary structure, component of the Mediator complex.

The protein localises to the nucleus. In terms of biological role, component of the Mediator complex, a coactivator involved in the regulated transcription of nearly all RNA polymerase II-dependent genes. Mediator functions as a bridge to convey information from gene-specific regulatory proteins to the basal RNA polymerase II transcription machinery. Mediator is recruited to promoters by direct interactions with regulatory proteins and serves as a scaffold for the assembly of a functional preinitiation complex with RNA polymerase II and the general transcription factors. This chain is Mediator of RNA polymerase II transcription subunit 31-B (med31-b), found in Xenopus laevis (African clawed frog).